The sequence spans 207 residues: Small ribosomal subunit protein uS4 (207 aa).

The segment at 31–55 (KCKLDSKPGQHGRTSGARTSDYGTQ) is disordered. A compositionally biased stretch (polar residues) spans 42-53 (GRTSGARTSDYG). The region spanning 97–160 (SRLDNVVYRM…KKQARIVEAL (64 aa)) is the S4 RNA-binding domain.

It belongs to the universal ribosomal protein uS4 family. As to quaternary structure, part of the 30S ribosomal subunit. Contacts protein S5. The interaction surface between S4 and S5 is involved in control of translational fidelity.

In terms of biological role, one of the primary rRNA binding proteins, it binds directly to 16S rRNA where it nucleates assembly of the body of the 30S subunit. Its function is as follows. With S5 and S12 plays an important role in translational accuracy. This Burkholderia orbicola (strain MC0-3) protein is Small ribosomal subunit protein uS4.